We begin with the raw amino-acid sequence, 383 residues long: E3 ubiquitin-protein ligase SPL2 (383 aa).

Residues M1–D14 lie on the Cytoplasmic side of the membrane. The helical transmembrane segment at I15–S35 threads the bilayer. At A36–N269 the chain is on the chloroplast intermembrane side. A helical membrane pass occupies residues F270–A290. At V291–S383 the chain is on the cytoplasmic side. The segment at C331–C370 adopts an RING-type zinc-finger fold.

The protein localises to the plastid. It localises to the chloroplast outer membrane. The catalysed reaction is S-ubiquitinyl-[E2 ubiquitin-conjugating enzyme]-L-cysteine + [acceptor protein]-L-lysine = [E2 ubiquitin-conjugating enzyme]-L-cysteine + N(6)-ubiquitinyl-[acceptor protein]-L-lysine.. The protein operates within protein modification; protein ubiquitination. Functionally, possesses E3 ubiquitin-protein ligase activity. The polypeptide is E3 ubiquitin-protein ligase SPL2 (Arabidopsis thaliana (Mouse-ear cress)).